The sequence spans 562 residues: ATP-dependent RNA helicase dbp2 (562 aa).

Residues 132–160 (ETFDEAGFPRYVMDEVKAQGFPAPTAIQS) carry the Q motif motif. Residues 163–338 (WPMALSGRDV…ADFLTDFIQV (176 aa)) enclose the Helicase ATP-binding domain. 176 to 183 (AETGSGKT) is a binding site for ATP. A DEAD box motif is present at residues 286 to 289 (DEAD). Positions 370 to 515 (HLEKIMEGRE…QIDPRLAEMA (146 aa)) constitute a Helicase C-terminal domain. Residues 526–548 (GGYRGRGGGGWRGGRGGGGGGGS) are RNA-binding RGG-box. The span at 536-550 (WRGGRGGGGGGGSVG) shows a compositional bias: gly residues. Residues 536–562 (WRGGRGGGGGGGSVGGANALPLNNRRW) are disordered.

Belongs to the DEAD box helicase family. DDX5/DBP2 subfamily. In terms of assembly, associates with polysomes.

The protein resides in the cytoplasm. It localises to the nucleus. The catalysed reaction is ATP + H2O = ADP + phosphate + H(+). In terms of biological role, ATP-dependent RNA helicase involved nonsense-mediated mRNA decay and ribosome biogenesis through rRNA processing. In Neurospora crassa (strain ATCC 24698 / 74-OR23-1A / CBS 708.71 / DSM 1257 / FGSC 987), this protein is ATP-dependent RNA helicase dbp2 (drh-1).